The sequence spans 107 residues: NADH-quinone oxidoreductase subunit K 2 (107 aa).

The next 3 membrane-spanning stretches (helical) occupy residues 3–23 (LPIYYPLGLGALLFGLGLWGA), 30–50 (VRILMFIEIMLNGVNLNLITF), and 67–87 (ILTLFVMTVAAAEASVGLAII).

Belongs to the complex I subunit 4L family. In terms of assembly, NDH-1 is composed of 14 different subunits. Subunits NuoA, H, J, K, L, M, N constitute the membrane sector of the complex.

Its subcellular location is the cell membrane. It catalyses the reaction a quinone + NADH + 5 H(+)(in) = a quinol + NAD(+) + 4 H(+)(out). Functionally, NDH-1 shuttles electrons from NADH, via FMN and iron-sulfur (Fe-S) centers, to quinones in the respiratory chain. The immediate electron acceptor for the enzyme in this species is believed to be a menaquinone. Couples the redox reaction to proton translocation (for every two electrons transferred, four hydrogen ions are translocated across the cytoplasmic membrane), and thus conserves the redox energy in a proton gradient. The chain is NADH-quinone oxidoreductase subunit K 2 from Symbiobacterium thermophilum (strain DSM 24528 / JCM 14929 / IAM 14863 / T).